Consider the following 211-residue polypeptide: FMN-dependent NADH:quinone oxidoreductase (211 aa).

FMN contacts are provided by residues S10 and 16 to 18 (STS).

This sequence belongs to the azoreductase type 1 family. Homodimer. It depends on FMN as a cofactor.

The catalysed reaction is 2 a quinone + NADH + H(+) = 2 a 1,4-benzosemiquinone + NAD(+). It catalyses the reaction N,N-dimethyl-1,4-phenylenediamine + anthranilate + 2 NAD(+) = 2-(4-dimethylaminophenyl)diazenylbenzoate + 2 NADH + 2 H(+). Quinone reductase that provides resistance to thiol-specific stress caused by electrophilic quinones. In terms of biological role, also exhibits azoreductase activity. Catalyzes the reductive cleavage of the azo bond in aromatic azo compounds to the corresponding amines. The chain is FMN-dependent NADH:quinone oxidoreductase from Frankia casuarinae (strain DSM 45818 / CECT 9043 / HFP020203 / CcI3).